A 159-amino-acid polypeptide reads, in one-letter code: ATP synthase subunit b 2 (159 aa).

The chain crosses the membrane as a helical span at residues 1–21; it reads MDATFWALVALIIFVGILLYM.

The protein belongs to the ATPase B chain family. In terms of assembly, F-type ATPases have 2 components, F(1) - the catalytic core - and F(0) - the membrane proton channel. F(1) has five subunits: alpha(3), beta(3), gamma(1), delta(1), epsilon(1). F(0) has three main subunits: a(1), b(2) and c(10-14). The alpha and beta chains form an alternating ring which encloses part of the gamma chain. F(1) is attached to F(0) by a central stalk formed by the gamma and epsilon chains, while a peripheral stalk is formed by the delta and b chains.

Its subcellular location is the cell inner membrane. Functionally, f(1)F(0) ATP synthase produces ATP from ADP in the presence of a proton or sodium gradient. F-type ATPases consist of two structural domains, F(1) containing the extramembraneous catalytic core and F(0) containing the membrane proton channel, linked together by a central stalk and a peripheral stalk. During catalysis, ATP synthesis in the catalytic domain of F(1) is coupled via a rotary mechanism of the central stalk subunits to proton translocation. Component of the F(0) channel, it forms part of the peripheral stalk, linking F(1) to F(0). The polypeptide is ATP synthase subunit b 2 (Chelativorans sp. (strain BNC1)).